A 507-amino-acid polypeptide reads, in one-letter code: MLAGQALAFLGLTWGTFQSLAIPRITECGLSCSQGFACRSHRNRNIFNSFCRPRPVSMSRSVLEALTSSTAMQCVPSDGCAMLLRVRASITLHERLRGLEACAMSLDTQETQCQSVWVARASHRQQGGQQLQVHFGCFAVSVAQHLYVTLRTIPHFCGVQLDQRHLVEDCGEEDVGRSVPDCLAGKLSYWVDRRRKAILVQVPRASGSPDYYLRLCLKRFTCEDAGAPVRVTANSVSQAVFLPYSQELPCLCLEGWSATPDAVRIQICPFENDTEALEVLWDTVYYHPESQTLSWEPACPVSGHVSLCWRPGPGAGCRKLQQSSQLVHRRVQYPLVDTQPQLCLKFSTSWGSWVRCPFEQRRFPTWKMTIQPSPTKGHLRVTFFSSSPAHFQVHLCHRRKSQLPACQRTLQASPLPSASGDLAAAPAFAFLDLPREEACAPGICIQGWRTDVHFSVPQQLCNLRSSGCPSLRGRRRPRTRPRPPTAGWAWRALNRRLGGGNGETIRP.

The signal sequence occupies residues 1–21; that stretch reads MLAGQALAFLGLTWGTFQSLA.

It localises to the secreted. In Homo sapiens (Human), this protein is Interleukin-17 receptor E-like protein.